The sequence spans 154 residues: Oleosin 16.4 kDa (154 aa).

A2 carries the post-translational modification N-acetylalanine. The tract at residues 2 to 33 is polar; it reads ADRDRSYRTFDQVVRGDRTNYQSGPSTTQVLT. 3 consecutive transmembrane segments (helical) span residues 31–51, 65–85, and 86–106; these read VLTV…AGLT, LFVI…MAVA, and GFLS…YVFN. Residues 34–105 form a hydrophobic region; that stretch reads VLTLLPIGGT…TGLSSLSYVF (72 aa).

Belongs to the oleosin family.

Its subcellular location is the lipid droplet. It is found in the membrane. In terms of biological role, may have a structural role to stabilize the lipid body during desiccation of the seed by preventing coalescence of the oil. Probably interacts with both lipid and phospholipid moieties of lipid bodies. May also provide recognition signals for specific lipase anchorage in lipolysis during seedling growth. This chain is Oleosin 16.4 kDa (MATP7), found in Gossypium hirsutum (Upland cotton).